Here is a 219-residue protein sequence, read N- to C-terminus: Uracil-DNA glycosylase (219 aa).

Aspartate 63 serves as the catalytic Proton acceptor.

It belongs to the uracil-DNA glycosylase (UDG) superfamily. UNG family.

The protein localises to the cytoplasm. It carries out the reaction Hydrolyzes single-stranded DNA or mismatched double-stranded DNA and polynucleotides, releasing free uracil.. Its function is as follows. Excises uracil residues from the DNA which can arise as a result of misincorporation of dUMP residues by DNA polymerase or due to deamination of cytosine. The protein is Uracil-DNA glycosylase of Mesomycoplasma hyopneumoniae (strain 7448) (Mycoplasma hyopneumoniae).